The following is a 1728-amino-acid chain: Hybrid PKS-NRPS synthetase TAS1 (1728 aa).

A condensation (C) domain region spans residues 153 to 499 (SPLSKAQMAL…MDPTLLDFKV (347 aa)). The interval 608 to 1002 (KARAASQPDL…KLHIQGRIGN (395 aa)) is adenylation (A) domain. Residues 1141–1219 (MLRRHLTAEV…KQVDCLMGIV (79 aa)) form the Carrier domain. Ser-1177 is modified (O-(pantetheine 4'-phosphoryl)serine). A disordered region spans residues 1225 to 1256 (LGSEPTGGSSSRSQSRRSAETSSSSTSAPSSV). Composition is skewed to low complexity over residues 1226 to 1237 (GSEPTGGSSSRS) and 1244 to 1255 (ETSSSSTSAPSS). In terms of domain architecture, Ketosynthase family 3 (KS3) spans 1262–1714 (RNLYAIVGIS…SDATWFVIST (453 aa)). Residues Cys-1436, His-1579, and Asn-1633 each act as for beta-ketoacyl synthase activity in the active site.

It in the N-terminal section; belongs to the NRP synthetase family. Pantetheine 4'-phosphate serves as cofactor.

The enzyme catalyses acetoacetyl-CoA + L-isoleucine + ATP = tenuazonic acid + AMP + diphosphate + CoA + 2 H(+). In terms of biological role, hybrid PKS-NRPS synthetase that mediates the biosynthesis of the toxin tenuazonic acid (TeA), an inhibitor of protein biosynthesis on ribosomes by suppressing the release of new protein. TAS1 alone is sufficient for TeA synthesis via the condensation of isoleucine (Ile) with acetoacetyl-CoA by the N-terminal NRPS module and subsequent cyclization conducted by the C-terminal KS domain. This chain is Hybrid PKS-NRPS synthetase TAS1, found in Pyricularia oryzae (strain 70-15 / ATCC MYA-4617 / FGSC 8958) (Rice blast fungus).